We begin with the raw amino-acid sequence, 390 residues long: Probable tRNA sulfurtransferase (390 aa).

Positions 58–161 (EAVARRLQRV…DEGAYIYSRI (104 aa)) constitute a THUMP domain. Residues 179-180 (LI), 204-205 (HF), Arg261, Gly283, and Gln292 each bind ATP.

The protein belongs to the ThiI family.

The protein resides in the cytoplasm. It carries out the reaction [ThiI sulfur-carrier protein]-S-sulfanyl-L-cysteine + a uridine in tRNA + 2 reduced [2Fe-2S]-[ferredoxin] + ATP + H(+) = [ThiI sulfur-carrier protein]-L-cysteine + a 4-thiouridine in tRNA + 2 oxidized [2Fe-2S]-[ferredoxin] + AMP + diphosphate. The enzyme catalyses [ThiS sulfur-carrier protein]-C-terminal Gly-Gly-AMP + S-sulfanyl-L-cysteinyl-[cysteine desulfurase] + AH2 = [ThiS sulfur-carrier protein]-C-terminal-Gly-aminoethanethioate + L-cysteinyl-[cysteine desulfurase] + A + AMP + 2 H(+). It participates in cofactor biosynthesis; thiamine diphosphate biosynthesis. Its function is as follows. Catalyzes the ATP-dependent transfer of a sulfur to tRNA to produce 4-thiouridine in position 8 of tRNAs, which functions as a near-UV photosensor. Also catalyzes the transfer of sulfur to the sulfur carrier protein ThiS, forming ThiS-thiocarboxylate. This is a step in the synthesis of thiazole, in the thiamine biosynthesis pathway. The sulfur is donated as persulfide by IscS. This Moorella thermoacetica (strain ATCC 39073 / JCM 9320) protein is Probable tRNA sulfurtransferase.